The primary structure comprises 572 residues: Protein misato homolog 1 (572 aa).

It belongs to the misato family.

It localises to the mitochondrion outer membrane. The protein resides in the cytoplasm. Functionally, involved in the regulation of mitochondrial distribution and morphology. Required for mitochondrial fusion and mitochondrial network formation. The polypeptide is Protein misato homolog 1 (MSTO1) (Bos taurus (Bovine)).